A 1300-amino-acid chain; its full sequence is DNA-directed RNA polymerase subunit beta (1300 aa).

This sequence belongs to the RNA polymerase beta chain family. The RNAP catalytic core consists of 2 alpha, 1 beta, 1 beta' and 1 omega subunit. When a sigma factor is associated with the core the holoenzyme is formed, which can initiate transcription.

It catalyses the reaction RNA(n) + a ribonucleoside 5'-triphosphate = RNA(n+1) + diphosphate. Functionally, DNA-dependent RNA polymerase catalyzes the transcription of DNA into RNA using the four ribonucleoside triphosphates as substrates. The sequence is that of DNA-directed RNA polymerase subunit beta from Chlorobium chlorochromatii (strain CaD3).